We begin with the raw amino-acid sequence, 311 residues long: MNILLANPRGFCAGVDRAISIVESALEKFGAPIYVRHEVVHNRYVVNKLKEAGAVFVEELDEVPDDSIVIFSAHGVSKAVREMAKSRALKVFDATCPLVTKVHMEVHRASRKGSEAVLIGHAGHPEVIGTMGQYENREGGMYLVETPEDVAKLKVKNPDDLCFVTQTTLSVDETSDVIDALRAHFPKIQGPRKDDICYATQNRQDAVREMAGLVDAMLVVGSRNSSNSNRLRELAEKVGAKAYLIDDASMIEADWLAGVEAIGVTAGASAPEVLVQSVITRLRELGGKVVAEHPGREENVVFEVPPELRIL.

A [4Fe-4S] cluster-binding site is contributed by Cys-12. The (2E)-4-hydroxy-3-methylbut-2-enyl diphosphate site is built by His-41 and His-74. His-41 and His-74 together coordinate dimethylallyl diphosphate. Positions 41 and 74 each coordinate isopentenyl diphosphate. Cys-96 serves as a coordination point for [4Fe-4S] cluster. (2E)-4-hydroxy-3-methylbut-2-enyl diphosphate is bound at residue His-124. His-124 serves as a coordination point for dimethylallyl diphosphate. His-124 contributes to the isopentenyl diphosphate binding site. Residue Glu-126 is the Proton donor of the active site. Thr-167 is a (2E)-4-hydroxy-3-methylbut-2-enyl diphosphate binding site. [4Fe-4S] cluster is bound at residue Cys-197. Ser-225, Ser-226, Asn-227, and Ser-269 together coordinate (2E)-4-hydroxy-3-methylbut-2-enyl diphosphate. The dimethylallyl diphosphate site is built by Ser-225, Ser-226, Asn-227, and Ser-269. Isopentenyl diphosphate is bound by residues Ser-225, Ser-226, Asn-227, and Ser-269.

The protein belongs to the IspH family. It depends on [4Fe-4S] cluster as a cofactor.

It catalyses the reaction isopentenyl diphosphate + 2 oxidized [2Fe-2S]-[ferredoxin] + H2O = (2E)-4-hydroxy-3-methylbut-2-enyl diphosphate + 2 reduced [2Fe-2S]-[ferredoxin] + 2 H(+). The catalysed reaction is dimethylallyl diphosphate + 2 oxidized [2Fe-2S]-[ferredoxin] + H2O = (2E)-4-hydroxy-3-methylbut-2-enyl diphosphate + 2 reduced [2Fe-2S]-[ferredoxin] + 2 H(+). Its pathway is isoprenoid biosynthesis; dimethylallyl diphosphate biosynthesis; dimethylallyl diphosphate from (2E)-4-hydroxy-3-methylbutenyl diphosphate: step 1/1. The protein operates within isoprenoid biosynthesis; isopentenyl diphosphate biosynthesis via DXP pathway; isopentenyl diphosphate from 1-deoxy-D-xylulose 5-phosphate: step 6/6. Catalyzes the conversion of 1-hydroxy-2-methyl-2-(E)-butenyl 4-diphosphate (HMBPP) into a mixture of isopentenyl diphosphate (IPP) and dimethylallyl diphosphate (DMAPP). Acts in the terminal step of the DOXP/MEP pathway for isoprenoid precursor biosynthesis. This chain is 4-hydroxy-3-methylbut-2-enyl diphosphate reductase, found in Aeromonas hydrophila subsp. hydrophila (strain ATCC 7966 / DSM 30187 / BCRC 13018 / CCUG 14551 / JCM 1027 / KCTC 2358 / NCIMB 9240 / NCTC 8049).